We begin with the raw amino-acid sequence, 352 residues long: Phosphoribosylformylglycinamidine cyclo-ligase (352 aa).

The protein belongs to the AIR synthase family.

The protein resides in the cytoplasm. It catalyses the reaction 2-formamido-N(1)-(5-O-phospho-beta-D-ribosyl)acetamidine + ATP = 5-amino-1-(5-phospho-beta-D-ribosyl)imidazole + ADP + phosphate + H(+). It participates in purine metabolism; IMP biosynthesis via de novo pathway; 5-amino-1-(5-phospho-D-ribosyl)imidazole from N(2)-formyl-N(1)-(5-phospho-D-ribosyl)glycinamide: step 2/2. In Coxiella burnetii (strain RSA 331 / Henzerling II), this protein is Phosphoribosylformylglycinamidine cyclo-ligase.